The sequence spans 1181 residues: Clustered mitochondria protein homolog (1181 aa).

The tract at residues 165-195 (AKAEALAKNEEVSEDEESEPEDDTPMKQSTQ) is disordered. Residues 176 to 187 (VSEDEESEPEDD) show a composition bias toward acidic residues. A Clu domain is found at 379-622 (DMARNQELLS…RLAPVDIAFL (244 aa)). Residues 1130–1181 (GRLARQAPKPTATHQKEAPKKASKKTKGKGKGKDDKGEKLVAELKKKKAGKR) form a disordered region. The segment covering 1150 to 1159 (KASKKTKGKG) has biased composition (basic residues). Basic and acidic residues predominate over residues 1160 to 1173 (KGKDDKGEKLVAEL).

Belongs to the CLU family. As to quaternary structure, may associate with the eukaryotic translation initiation factor 3 (eIF-3) complex.

Its subcellular location is the cytoplasm. Its function is as follows. mRNA-binding protein involved in proper cytoplasmic distribution of mitochondria. In Yarrowia lipolytica (strain CLIB 122 / E 150) (Yeast), this protein is Clustered mitochondria protein homolog.